A 266-amino-acid chain; its full sequence is 15-hydroxyprostaglandin dehydrogenase [NAD(+)] (266 aa).

NAD(+)-binding positions include 12-20 (GAAQGIGRA), 36-37 (DW), 63-65 (CDV), and N91. Positions 138 and 148 each coordinate substrate. Catalysis depends on Y151, which acts as the Proton acceptor. NAD(+) contacts are provided by residues 151–155 (YCASK) and 186–188 (VDT).

It belongs to the short-chain dehydrogenases/reductases (SDR) family. Homodimer.

The protein resides in the cytoplasm. It catalyses the reaction prostaglandin E2 + NAD(+) = 15-oxoprostaglandin E2 + NADH + H(+). The catalysed reaction is (15S)-hydroxy-(5Z,8Z,11Z,13E)-eicosatetraenoate + NAD(+) = 15-oxo-(5Z,8Z,11Z,13E)-eicosatetraenoate + NADH + H(+). The enzyme catalyses (11R)-hydroxy-(5Z,8Z,12E,14Z)-eicosatetraenoate + NAD(+) = 11-oxo-(5Z,8Z,12E,14Z)-eicosatetraenoate + NADH + H(+). It carries out the reaction lipoxin A4 + NAD(+) = 15-oxo-(5S,6R)-dihydroxy-(7E,9E,11Z,13E)-eicosatetraenoate + NADH + H(+). It catalyses the reaction 15-oxo-(5S,6R)-dihydroxy-(7E,9E,11Z)-eicosatrienoate + NADH + H(+) = (5S,6R,15S)-trihydroxy-(7E,9E,11Z)-eicosatrienoate + NAD(+). The catalysed reaction is prostaglandin A1 + NAD(+) = 15-oxo-prostaglandin A1 + NADH + H(+). The enzyme catalyses prostaglandin E1 + NAD(+) = 15-oxoprostaglandin E1 + NADH + H(+). It carries out the reaction 14-hydroxy-(4Z,7Z,10Z,12E,16Z,19Z)-docosahexaenoate + NAD(+) = 14-oxo-(4Z,7Z,10Z,12E,16Z,19Z)-docosahexaenoate + NADH + H(+). It catalyses the reaction resolvin E1 + NAD(+) = 18-oxo-resolvin E1 + NADH + H(+). The catalysed reaction is resolvin D1 + NAD(+) = 8-oxoresolvin D1 + NADH + H(+). The enzyme catalyses resolvin D1 + NAD(+) = 17-oxoresolvin D1 + NADH + H(+). It carries out the reaction resolvin D2 + NAD(+) = 7-oxoresolvin D2 + NADH + H(+). It catalyses the reaction resolvin D2 + NAD(+) = 16-oxoresolvin D2 + NADH + H(+). Functionally, catalyzes the NAD-dependent dehydrogenation (oxidation) of a broad array of hydroxylated polyunsaturated fatty acids (mainly eicosanoids and docosanoids, including prostaglandins, lipoxins and resolvins), yielding their corresponding keto (oxo) metabolites. Decreases the levels of the pro-proliferative prostaglandins such as prostaglandin E2 (whose activity is increased in cancer because of an increase in the expression of cyclooxygenase 2) and generates oxo-fatty acid products that can profoundly influence cell function by abrogating pro-inflammatory cytokine expression. Converts resolvins E1, D1 and D2 to their oxo products, which represents a mode of resolvin inactivation. Resolvin E1 plays important roles during the resolution phase of acute inflammation, while resolvins D1 and D2 have a unique role in obesity-induced adipose inflammation. The sequence is that of 15-hydroxyprostaglandin dehydrogenase [NAD(+)] (HPGD) from Bos taurus (Bovine).